The following is a 258-amino-acid chain: Imidazole glycerol phosphate synthase subunit HisF (258 aa).

Residues aspartate 12 and aspartate 131 contribute to the active site.

Belongs to the HisA/HisF family. In terms of assembly, heterodimer of HisH and HisF.

Its subcellular location is the cytoplasm. The enzyme catalyses 5-[(5-phospho-1-deoxy-D-ribulos-1-ylimino)methylamino]-1-(5-phospho-beta-D-ribosyl)imidazole-4-carboxamide + L-glutamine = D-erythro-1-(imidazol-4-yl)glycerol 3-phosphate + 5-amino-1-(5-phospho-beta-D-ribosyl)imidazole-4-carboxamide + L-glutamate + H(+). The protein operates within amino-acid biosynthesis; L-histidine biosynthesis; L-histidine from 5-phospho-alpha-D-ribose 1-diphosphate: step 5/9. In terms of biological role, IGPS catalyzes the conversion of PRFAR and glutamine to IGP, AICAR and glutamate. The HisF subunit catalyzes the cyclization activity that produces IGP and AICAR from PRFAR using the ammonia provided by the HisH subunit. The sequence is that of Imidazole glycerol phosphate synthase subunit HisF from Pseudarthrobacter chlorophenolicus (strain ATCC 700700 / DSM 12829 / CIP 107037 / JCM 12360 / KCTC 9906 / NCIMB 13794 / A6) (Arthrobacter chlorophenolicus).